The primary structure comprises 718 residues: Kinesin-like protein KIF2C (718 aa).

The interval 1-248 (MESLPARLFP…CHPLTLTDPT (248 aa)) is globular. A phosphoserine mark is found at Ser-3 and Ser-19. Residues 86–111 (PKQKRRSVNSKIPAPKEGLRSRSTRM) are disordered. The residue at position 92 (Ser-92) is a Phosphoserine; by AURKB. The short motif at 95-98 (SKIP) is the Microtubule tip localization signal element. Ser-106, Ser-108, Ser-112, Ser-163, and Ser-186 each carry phosphoserine. The segment at 201–232 (EKRAQNSEIRIKRAQEYDSSFPNWEFARMIKE) is negative regulator of microtubule-binding. The Kinesin motor domain maps to 252 to 582 (RICVCVRKRP…LRYADRVKEL (331 aa)). Residues Arg-258 and 342–349 (GQTGSGKT) each bind ATP. Positions 409–412 (KKAK) match the Nuclear localization signal motif. Residues Ser-513 and Ser-626 each carry the phosphoserine modification. Coiled-coil stretches lie at residues 613–651 (NFKEEEELSSQMSSFNEAMSQIRELEERAMEELREIIQQ) and 689–716 (ALREVIKALRVAMQLEEQASKQMNSKKR).

This sequence belongs to the TRAFAC class myosin-kinesin ATPase superfamily. Kinesin family. MCAK/KIF2 subfamily. Interacts with CENPH. Interacts with MTUS2/TIP150; the interaction is direct. Interacts with MAPRE1; the interaction is direct, regulated by phosphorylation and is probably required for targeting to growing microtubule plus ends. Interacts with KIF18B at microtubule tips; this interaction increases the affinity of both partners for microtubule plus ends and is required for robust microtubule depolymerization. Phosphorylation by AURKA or AURKB strongly reduces KIF18B-binding. In terms of processing, phosphorylation by AURKB, regulates association with centromeres and kinetochores and the microtubule depolymerization activity. Post-translationally, ubiquitinated.

The protein resides in the cytoplasm. It is found in the cytoskeleton. Its subcellular location is the nucleus. The protein localises to the chromosome. It localises to the centromere. The protein resides in the kinetochore. In complex with KIF18B, constitutes the major microtubule plus-end depolymerizing activity in mitotic cells. Regulates the turnover of microtubules at the kinetochore and functions in chromosome segregation during mitosis. Plays a role in chromosome congression and is required for the lateral to end-on conversion of the chromosome-microtubule attachment. This chain is Kinesin-like protein KIF2C (KIF2C), found in Cricetulus griseus (Chinese hamster).